The chain runs to 283 residues: Protein/nucleic acid deglycase HchA (283 aa).

Zn(2+)-binding residues include H86, E91, and H123. Catalysis depends on C185, which acts as the Nucleophile.

Belongs to the peptidase C56 family. HchA subfamily. As to quaternary structure, homodimer.

Its subcellular location is the cytoplasm. It carries out the reaction N(omega)-(1-hydroxy-2-oxopropyl)-L-arginyl-[protein] + H2O = lactate + L-arginyl-[protein] + H(+). It catalyses the reaction N(6)-(1-hydroxy-2-oxopropyl)-L-lysyl-[protein] + H2O = lactate + L-lysyl-[protein] + H(+). The enzyme catalyses S-(1-hydroxy-2-oxopropyl)-L-cysteinyl-[protein] + H2O = lactate + L-cysteinyl-[protein] + H(+). The catalysed reaction is N(omega)-(1-hydroxy-2-oxoethyl)-L-arginyl-[protein] + H2O = L-arginyl-[protein] + glycolate + H(+). It carries out the reaction N(6)-(1-hydroxy-2-oxoethyl)-L-lysyl-[protein] + H2O = glycolate + L-lysyl-[protein] + H(+). It catalyses the reaction S-(1-hydroxy-2-oxoethyl)-L-cysteinyl-[protein] + H2O = glycolate + L-cysteinyl-[protein] + H(+). The enzyme catalyses N(2)-(1-hydroxy-2-oxopropyl)-dGTP + H2O = lactate + dGTP + H(+). The catalysed reaction is N(2)-(1-hydroxy-2-oxopropyl)-GTP + H2O = lactate + GTP + H(+). It carries out the reaction N(2)-(1-hydroxy-2-oxopropyl)-GDP + H2O = lactate + GDP + H(+). It catalyses the reaction N(2)-(1-hydroxy-2-oxopropyl)-GMP + H2O = lactate + GMP + H(+). The enzyme catalyses N(2)-(1-hydroxy-2-oxoethyl)-dGTP + H2O = dGTP + glycolate + H(+). The catalysed reaction is N(2)-(1-hydroxy-2-oxoethyl)-GTP + H2O = glycolate + GTP + H(+). It carries out the reaction N(2)-(1-hydroxy-2-oxoethyl)-GDP + H2O = glycolate + GDP + H(+). It catalyses the reaction N(2)-(1-hydroxy-2-oxoethyl)-GMP + H2O = glycolate + GMP + H(+). The enzyme catalyses an N(2)-(1-hydroxy-2-oxopropyl)-guanosine in RNA + H2O = a guanosine in RNA + lactate + H(+). The catalysed reaction is an N(2)-(1-hydroxy-2-oxopropyl)-2'-deoxyguanosine in DNA + H2O = a 2'-deoxyguanosine in DNA + lactate + H(+). It carries out the reaction an N(2)-(1-hydroxy-2-oxoethyl)-guanosine in RNA + H2O = a guanosine in RNA + glycolate + H(+). It catalyses the reaction an N(2)-(1-hydroxy-2-oxoethyl)-2'-deoxyguanosine in DNA + H2O = a 2'-deoxyguanosine in DNA + glycolate + H(+). Its function is as follows. Protein and nucleotide deglycase that catalyzes the deglycation of the Maillard adducts formed between amino groups of proteins or nucleotides and reactive carbonyl groups of glyoxals. Thus, functions as a protein deglycase that repairs methylglyoxal- and glyoxal-glycated proteins, and releases repaired proteins and lactate or glycolate, respectively. Deglycates cysteine, arginine and lysine residues in proteins, and thus reactivates these proteins by reversing glycation by glyoxals. Acts on early glycation intermediates (hemithioacetals and aminocarbinols), preventing the formation of Schiff bases and advanced glycation endproducts (AGE). Also functions as a nucleotide deglycase able to repair glycated guanine in the free nucleotide pool (GTP, GDP, GMP, dGTP) and in DNA and RNA. Is thus involved in a major nucleotide repair system named guanine glycation repair (GG repair), dedicated to reversing methylglyoxal and glyoxal damage via nucleotide sanitization and direct nucleic acid repair. Plays an important role in protecting cells from carbonyl stress. This Escherichia coli (strain 55989 / EAEC) protein is Protein/nucleic acid deglycase HchA.